Reading from the N-terminus, the 373-residue chain is Putative zinc finger protein 012R (373 aa).

The C2H2-type zinc finger occupies 2–29 (FECTHCDLHFESKSKLATHQKTKKCTAH).

Belongs to the IIV-6 302L family.

The sequence is that of Putative zinc finger protein 012R from Invertebrate iridescent virus 3 (IIV-3).